The sequence spans 850 residues: Protein translocase subunit SecA 2 (850 aa).

Residues Gln-83, Gly-101–Thr-105, and Asp-491 each bind ATP.

This sequence belongs to the SecA family. In terms of assembly, monomer and homodimer. Part of the essential Sec protein translocation apparatus which comprises SecA, SecYEG and auxiliary proteins SecDF. Other proteins may also be involved.

It localises to the cell membrane. Its subcellular location is the cytoplasm. It carries out the reaction ATP + H2O + cellular proteinSide 1 = ADP + phosphate + cellular proteinSide 2.. Its function is as follows. Part of the Sec protein translocase complex. Interacts with the SecYEG preprotein conducting channel. Has a central role in coupling the hydrolysis of ATP to the transfer of proteins into and across the cell membrane, serving as an ATP-driven molecular motor driving the stepwise translocation of polypeptide chains across the membrane. The chain is Protein translocase subunit SecA 2 from Mycolicibacterium vanbaalenii (strain DSM 7251 / JCM 13017 / BCRC 16820 / KCTC 9966 / NRRL B-24157 / PYR-1) (Mycobacterium vanbaalenii).